The sequence spans 470 residues: 6-phospho-beta-galactosidase (470 aa).

D-galactose 6-phosphate is bound by residues glutamine 19, histidine 116, asparagine 159, glutamate 160, and asparagine 297. The Proton donor role is filled by glutamate 160. The Nucleophile role is filled by glutamate 375. D-galactose 6-phosphate-binding residues include serine 430, tryptophan 431, lysine 437, and tyrosine 439.

It belongs to the glycosyl hydrolase 1 family.

It carries out the reaction a 6-phospho-beta-D-galactoside + H2O = D-galactose 6-phosphate + an alcohol. It participates in carbohydrate metabolism; lactose degradation; D-galactose 6-phosphate and beta-D-glucose from lactose 6-phosphate: step 1/1. This chain is 6-phospho-beta-galactosidase, found in Staphylococcus aureus (strain MRSA252).